The following is a 103-amino-acid chain: Large ribosomal subunit protein P2 (103 aa).

Positions 64–103 are disordered; that stretch reads LAISSSQKSEPAQPADTAESTQATENKEEEDEDFDIFAAF. Positions 90-103 are enriched in acidic residues; sequence KEEEDEDFDIFAAF.

It belongs to the eukaryotic ribosomal protein P1/P2 family. In terms of assembly, component of the large ribosomal subunit.

Its subcellular location is the cytoplasm. Plays an important role in the elongation step of protein synthesis. The polypeptide is Large ribosomal subunit protein P2 (RPP2A) (Encephalitozoon cuniculi (strain GB-M1) (Microsporidian parasite)).